Here is a 278-residue protein sequence, read N- to C-terminus: 4-hydroxy-3-methylbut-2-enyl diphosphate reductase (278 aa).

Residue C12 participates in [4Fe-4S] cluster binding. (2E)-4-hydroxy-3-methylbut-2-enyl diphosphate contacts are provided by H40 and H75. 2 residues coordinate dimethylallyl diphosphate: H40 and H75. Isopentenyl diphosphate-binding residues include H40 and H75. C97 contributes to the [4Fe-4S] cluster binding site. H125 provides a ligand contact to (2E)-4-hydroxy-3-methylbut-2-enyl diphosphate. Position 125 (H125) interacts with dimethylallyl diphosphate. Position 125 (H125) interacts with isopentenyl diphosphate. The active-site Proton donor is E127. Residue T157 coordinates (2E)-4-hydroxy-3-methylbut-2-enyl diphosphate. Residue C187 participates in [4Fe-4S] cluster binding. 4 residues coordinate (2E)-4-hydroxy-3-methylbut-2-enyl diphosphate: S215, S216, N217, and S258. Dimethylallyl diphosphate contacts are provided by S215, S216, N217, and S258. 4 residues coordinate isopentenyl diphosphate: S215, S216, N217, and S258.

It belongs to the IspH family. Requires [4Fe-4S] cluster as cofactor.

It carries out the reaction isopentenyl diphosphate + 2 oxidized [2Fe-2S]-[ferredoxin] + H2O = (2E)-4-hydroxy-3-methylbut-2-enyl diphosphate + 2 reduced [2Fe-2S]-[ferredoxin] + 2 H(+). The catalysed reaction is dimethylallyl diphosphate + 2 oxidized [2Fe-2S]-[ferredoxin] + H2O = (2E)-4-hydroxy-3-methylbut-2-enyl diphosphate + 2 reduced [2Fe-2S]-[ferredoxin] + 2 H(+). Its pathway is isoprenoid biosynthesis; dimethylallyl diphosphate biosynthesis; dimethylallyl diphosphate from (2E)-4-hydroxy-3-methylbutenyl diphosphate: step 1/1. It functions in the pathway isoprenoid biosynthesis; isopentenyl diphosphate biosynthesis via DXP pathway; isopentenyl diphosphate from 1-deoxy-D-xylulose 5-phosphate: step 6/6. In terms of biological role, catalyzes the conversion of 1-hydroxy-2-methyl-2-(E)-butenyl 4-diphosphate (HMBPP) into a mixture of isopentenyl diphosphate (IPP) and dimethylallyl diphosphate (DMAPP). Acts in the terminal step of the DOXP/MEP pathway for isoprenoid precursor biosynthesis. In Pseudothermotoga lettingae (strain ATCC BAA-301 / DSM 14385 / NBRC 107922 / TMO) (Thermotoga lettingae), this protein is 4-hydroxy-3-methylbut-2-enyl diphosphate reductase.